The primary structure comprises 500 residues: Metal transporter Nramp3.1 (500 aa).

Transmembrane regions (helical) follow at residues 51–71 (LWLF…PGNL), 79–99 (AIAG…GLLV), 128–148 (MILW…EVIG), 160–180 (VLPL…FLFL), 188–208 (LEAA…WMFA), 234–254 (AVGV…SALV), 280–300 (AALA…AKGF), 322–342 (YGGG…AAGQ), 370–390 (ALIT…VFDT), 401–421 (WLNM…LCLV), 439–459 (VSWL…LDFF), and 467–487 (VFTT…IYLI).

It belongs to the NRAMP (TC 2.A.55) family. As to expression, expressed in roots, stems, buds and leaves.

Its subcellular location is the golgi apparatus. The protein localises to the trans-Golgi network membrane. It catalyses the reaction Mn(2+)(in) = Mn(2+)(out). The enzyme catalyses Fe(2+)(in) = Fe(2+)(out). Its function is as follows. Divalent metal transporter. Can transport manganese (Mn) and iron (Fe). Involved in the control of cell-to-cell transport of manganese (Mn) between organs and tissues to monitor Mn homeostasis. In Populus trichocarpa (Western balsam poplar), this protein is Metal transporter Nramp3.1.